Reading from the N-terminus, the 605-residue chain is UvrABC system protein C (605 aa).

Residues 13–92 enclose the GIY-YIG domain; the sequence is SEPGVYLMKD…IKRYRPKYNV (80 aa). In terms of domain architecture, UVR spans 205–240; the sequence is EKLMELLKEKMNESSMNFRFEEAAVYRDKIKSLEEM.

Belongs to the UvrC family. In terms of assembly, interacts with UvrB in an incision complex.

The protein localises to the cytoplasm. Its function is as follows. The UvrABC repair system catalyzes the recognition and processing of DNA lesions. UvrC both incises the 5' and 3' sides of the lesion. The N-terminal half is responsible for the 3' incision and the C-terminal half is responsible for the 5' incision. In Clostridioides difficile (strain 630) (Peptoclostridium difficile), this protein is UvrABC system protein C.